Here is a 504-residue protein sequence, read N- to C-terminus: Maturase K (504 aa).

This sequence belongs to the intron maturase 2 family. MatK subfamily.

The protein resides in the plastid. Its subcellular location is the chloroplast. In terms of biological role, usually encoded in the trnK tRNA gene intron. Probably assists in splicing its own and other chloroplast group II introns. The polypeptide is Maturase K (Vigna unguiculata (Cowpea)).